Consider the following 940-residue polypeptide: AP-2 complex subunit alpha (940 aa).

Residues serine 632 and serine 634 each carry the phosphoserine modification. A compositionally biased stretch (polar residues) spans 651–662 (SHSKLNNSNANT). Residues 651-679 (SHSKLNNSNANTDLLGLSTPPSNNIGSGS) form a disordered region. A compositionally biased stretch (low complexity) spans 668–679 (STPPSNNIGSGS).

It belongs to the adaptor complexes large subunit family. As to quaternary structure, adaptor protein complex 2 (AP-2) is a heterotetramer composed of two large adaptins (alpha-type and beta-type subunits), a medium adaptin (mu-type subunit AP50) and a small adaptin (sigma-type subunit AP17). As to expression, expressed in the Garland cells, imaginal disks, adult midgut precursors, the antenno-maxillary complex, the endoderm, the fat bodies, and the visceral mesoderm and cells of the CNS and PNS including neuroblasts, the presumptive stomatogastric nervous system, and the lateral chordotonal sense organs.

It is found in the cell membrane. The protein localises to the membrane. It localises to the coated pit. Its function is as follows. Adaptins are components of the adapter complexes which link clathrin to receptors in coated vesicles. Clathrin-associated protein complexes are believed to interact with the cytoplasmic tails of membrane proteins, leading to their selection and concentration. AP-2alpha is a subunit of the plasma membrane adapter. This is AP-2 complex subunit alpha (AP-2alpha) from Drosophila melanogaster (Fruit fly).